An 870-amino-acid chain; its full sequence is Translation initiation factor IF-2 (870 aa).

The interval 49–284 (SFQNSAPAEK…TKRKERPLPE (236 aa)) is disordered. Composition is skewed to basic and acidic residues over residues 70 to 81 (RKNEKKQEDNAG) and 94 to 109 (QNND…RDHS). The span at 116 to 127 (KPKAAALLQQFK) shows a compositional bias: low complexity. Basic and acidic residues-rich tracts occupy residues 144–159 (AKKE…KKEQ) and 168–183 (NKES…EKKV). The segment covering 254–279 (RKRRKNKNKKRKQEQKPKKQITKRKE) has biased composition (basic residues). The tr-type G domain occupies 371 to 540 (KRPPVVTIMG…LLQADMMELK (170 aa)). Positions 380–387 (GHVDHGKT) are G1. A GTP-binding site is contributed by 380 to 387 (GHVDHGKT). The segment at 405-409 (GITQK) is G2. The interval 426–429 (DTPG) is G3. GTP contacts are provided by residues 426–430 (DTPGH) and 480–483 (NKMD). A G4 region spans residues 480 to 483 (NKMD). The tract at residues 516-518 (SAR) is G5.

This sequence belongs to the TRAFAC class translation factor GTPase superfamily. Classic translation factor GTPase family. IF-2 subfamily.

Its subcellular location is the cytoplasm. Its function is as follows. One of the essential components for the initiation of protein synthesis. Protects formylmethionyl-tRNA from spontaneous hydrolysis and promotes its binding to the 30S ribosomal subunits. Also involved in the hydrolysis of GTP during the formation of the 70S ribosomal complex. This Lactobacillus helveticus (strain DPC 4571) protein is Translation initiation factor IF-2.